Here is a 71-residue protein sequence, read N- to C-terminus: UPF0346 protein BCQ_2236 (71 aa).

This sequence belongs to the UPF0346 family.

This chain is UPF0346 protein BCQ_2236, found in Bacillus cereus (strain Q1).